A 463-amino-acid chain; its full sequence is Asparagine--tRNA ligase (463 aa).

Belongs to the class-II aminoacyl-tRNA synthetase family. In terms of assembly, homodimer.

It is found in the cytoplasm. It catalyses the reaction tRNA(Asn) + L-asparagine + ATP = L-asparaginyl-tRNA(Asn) + AMP + diphosphate + H(+). This is Asparagine--tRNA ligase from Bacillus thuringiensis subsp. konkukian (strain 97-27).